Here is a 56-residue protein sequence, read N- to C-terminus: MASKGARDLIRMVSSAGTGHFYTTDKNKRNTPDKLEMKKFDPVVRKHVMYKEAKIK.

The protein belongs to the bacterial ribosomal protein bL33 family.

The sequence is that of Large ribosomal subunit protein bL33 from Marinomonas sp. (strain MWYL1).